A 203-amino-acid polypeptide reads, in one-letter code: MNVLIVYYSMYGHIHRMAEAVAEGVREVPGAEAVLRRVPETLSPDVLEKMGAVEPQKAFAHIPVATVDELASADAIIFGTPTRFGNMCGQMRQFLDATGGLWVKGSLVGKAAGVFTSSATQHGGQESTILTFHTFLLHQGMVIVGLPYAFAGQTRIDEITGGSPYGASTIAGGQGERLPSENDLAGARFQGRYVAQIAAKLNG.

The 192-residue stretch at 3–194 folds into the Flavodoxin-like domain; the sequence is VLIVYYSMYG…AGARFQGRYV (192 aa). FMN contacts are provided by residues 9 to 14 and 82 to 84; these read SMYGHI and TRF. An NAD(+)-binding site is contributed by Tyr11. A substrate-binding site is contributed by Trp102. FMN-binding positions include 117–123 and His138; that span reads SSATQHG.

It belongs to the WrbA family. FMN serves as cofactor.

It catalyses the reaction a quinone + NADH + H(+) = a quinol + NAD(+). It carries out the reaction a quinone + NADPH + H(+) = a quinol + NADP(+). The protein is NAD(P)H dehydrogenase (quinone) of Geobacter sulfurreducens (strain ATCC 51573 / DSM 12127 / PCA).